Here is a 337-residue protein sequence, read N- to C-terminus: G-protein coupled receptor 65 (337 aa).

At 1-5 the chain is on the extracellular side; that stretch reads MNSTC. An N-linked (GlcNAc...) asparagine glycan is attached at Asn-2. 2 disulfide bridges follow: Cys-5–Cys-160 and Cys-87–Cys-170. The chain crosses the membrane as a helical span at residues 6 to 42; the sequence is IEEQHDLDHYLFPIVYIFVIIVSIPANIGSLCVSFLQ. Topologically, residues 43-46 are cytoplasmic; the sequence is AKKE. The chain crosses the membrane as a helical span at residues 47–77; that stretch reads SELGIYLFSLSLSDLLYALTLPLWIDYTWNK. At 78–82 the chain is on the extracellular side; the sequence is DNWTF. Asn-79 is a glycosylation site (N-linked (GlcNAc...) asparagine). Residues 83–118 form a helical membrane-spanning segment; sequence SPALCKGSAFLMYMNFYSSTAFLTCIAVDRYLAVVY. At 119–126 the chain is on the cytoplasmic side; sequence PLKFFFLR. The helical transmembrane segment at 127–153 threads the bilayer; that stretch reads TRRFALMVSLSIWILETIFNAVMLWED. The Extracellular segment spans residues 154-174; that stretch reads ETVVEYCDAEKSNFTLCYDKY. The extracellular loop 2 (ECL2) stretch occupies residues 154 to 174; the sequence is ETVVEYCDAEKSNFTLCYDKY. A glycan (N-linked (GlcNAc...) asparagine) is linked at Asn-166. The helical transmembrane segment at 175–212 threads the bilayer; sequence PLEKWQINLNLFRTCTGYAIPLVTILICNRKVYQAVRH. The Cytoplasmic segment spans residues 213–216; it reads NKAT. The helical transmembrane segment at 217 to 252 threads the bilayer; that stretch reads ENKEKKRIIKLLVSITVTFVLCFTPFHVMLLIRCIL. Topologically, residues 253–264 are extracellular; sequence EHAVNFEDHSNS. A helical transmembrane segment spans residues 265–293; the sequence is GKRTYTMYRITVALTSLNCVADPILYCFV. The Cytoplasmic portion of the chain corresponds to 294 to 337; sequence TETGRYDMWNILKFCTGRCNTSQRQRKRILSVSTKDTMELEVLE.

It belongs to the G-protein coupled receptor 1 family. As to expression, predominantly expressed in thymus, spleen, lymph nodes, small intestine, lung, placenta and peripheral blood leukocytes.

The protein localises to the cell membrane. Its subcellular location is the early endosome membrane. It is found in the late endosome membrane. Its activity is regulated as follows. Activated by a network of residues that connects an extracellular-facing cavity to Glu-142, a conserved charged residue buried in the transmembrane core of the receptor. Protonation likely drives conformational changes in extracellular loop 2 (ECL2), which stabilizes movement of transmembrane 3 (TM3) and a series of rearrangements that connect the extracellular-facing cavity to Glu-142, a residue only conserved in proton-sensing G-protein coupled receptors. Activated by BTB09089, a positive allosteric modulator. Its function is as follows. Proton-sensing G-protein coupled receptor activated by extracellular pH, which is required to monitor pH changes and generate adaptive reactions. Activated by an optimal pH of 7.4. Ligand binding causes a conformation change that triggers signaling via guanine nucleotide-binding proteins (G proteins) and modulates the activity of downstream effectors, such as adenylate cyclase. GPR65 is mainly coupled to G(s) G proteins and mediates activation of adenylate cyclase activity. May also act as a receptor for the glycosphingolipid psychosine (PSY) and several related glycosphingolipids. Plays a role in immune response by maintaining lysosome function and regulating T-cell metabolism. Acts as a regulator of inflammation by mediating pH-sensing of extracellular acidification which takes place in inflamed tissues: activation regulates endo-lysosomal function of immune cells and T-cell metabolism. Constitutively active in endosomes and stimulates adenylate cyclase production from endosomes independently from extracellular pH changes. The protein is G-protein coupled receptor 65 of Homo sapiens (Human).